Reading from the N-terminus, the 216-residue chain is Large ribosomal subunit protein uL24m (216 aa).

The transit peptide at 1 to 9 directs the protein to the mitochondrion; sequence MRLTLLLEM. One can recognise a KOW domain in the interval 56 to 89; it reads YFRGDTVEVLHGKDAGKQGKVTQVVRARNWVVVD.

It belongs to the universal ribosomal protein uL24 family. In terms of assembly, component of the mitochondrial ribosome large subunit (39S) which comprises a 16S rRNA and about 50 distinct proteins. As to expression, ubiquitous. Expressed at greater levels in the kidney, adipose tissue, muscle and liver than the brain, heart, ovary and lung.

The protein resides in the mitochondrion. This is Large ribosomal subunit protein uL24m (mrpl24) from Xenopus laevis (African clawed frog).